The primary structure comprises 221 residues: CASP-like protein 4C1 (221 aa).

Residues 1 to 21 form a disordered region; it reads MDSPESSDRGLNPMTPDHGGH. At 1–54 the chain is on the cytoplasmic side; that stretch reads MDSPESSDRGLNPMTPDHGGHNGKVVHYFGQGVEGGPASPRKLGHGHLHPKANT. Residues 55–75 traverse the membrane as a helical segment; sequence ALLLLRLLTFAFSLASLVIMA. Over 76–101 the chain is Extracellular; that stretch reads TNSATTTATAGRHRTVNWVDFDTYRY. A helical membrane pass occupies residues 102 to 122; sequence VLAACAIVCLYSFAEIGLGLW. Residues 123-144 are Cytoplasmic-facing; sequence YLLKGRMVMPESMAHWFDFGHD. The helical transmembrane segment at 145 to 165 threads the bilayer; it reads QGFAYLIFSACSGATAVAHNL. The Extracellular portion of the chain corresponds to 166–189; that stretch reads RERHILIHGMYGCDEANSFCMKAE. Residues 190 to 210 traverse the membrane as a helical segment; it reads ISIGLAFGAFLFIALSSLLSG. At 211–221 the chain is on the cytoplasmic side; the sequence is YRLVKWLILGP.

This sequence belongs to the Casparian strip membrane proteins (CASP) family. As to quaternary structure, homodimer and heterodimers.

The protein localises to the cell membrane. This chain is CASP-like protein 4C1, found in Pteridium aquilinum subsp. aquilinum (Bracken fern).